Consider the following 379-residue polypeptide: tRNA(Met) cytidine acetate ligase (379 aa).

ATP is bound by residues 7 to 20 (ITEY…HQYH), Gly100, Asn153, and Arg178.

It belongs to the TmcAL family.

Its subcellular location is the cytoplasm. The enzyme catalyses cytidine(34) in elongator tRNA(Met) + acetate + ATP = N(4)-acetylcytidine(34) in elongator tRNA(Met) + AMP + diphosphate. Catalyzes the formation of N(4)-acetylcytidine (ac(4)C) at the wobble position of elongator tRNA(Met), using acetate and ATP as substrates. First activates an acetate ion to form acetyladenylate (Ac-AMP) and then transfers the acetyl group to tRNA to form ac(4)C34. The chain is tRNA(Met) cytidine acetate ligase from Staphylococcus aureus (strain MRSA252).